The following is a 194-amino-acid chain: Thymidine kinase (194 aa).

ATP is bound by residues 15–22 (GCMFSGKT) and 88–91 (DELH). The Proton acceptor role is filled by E89. Zn(2+) contacts are provided by C148, C151, C186, and C189.

It belongs to the thymidine kinase family. As to quaternary structure, homotetramer.

It is found in the cytoplasm. The enzyme catalyses thymidine + ATP = dTMP + ADP + H(+). In Roseiflexus castenholzii (strain DSM 13941 / HLO8), this protein is Thymidine kinase.